Reading from the N-terminus, the 487-residue chain is UDP-glucosyl transferase 73CC6 (487 aa).

His17 functions as the Proton acceptor in the catalytic mechanism. Asp114 functions as the Charge relay in the catalytic mechanism. Ser282, Trp346, Ala347, His364, Asn368, Ser369, Glu372, and Tyr386 together coordinate UDP.

This sequence belongs to the UDP-glycosyltransferase family. In terms of tissue distribution, mainly expressed in flowers and flower buds and, to a lesser extent, in leaves, stems and roots.

It participates in secondary metabolite biosynthesis; terpenoid biosynthesis. Its function is as follows. Component of the oleanane-type triterpene saponins (e.g. saponarioside A and saponarioside B) biosynthetic pathway, leading to the production of natural products with detergent properties used as traditional sources of soap. A glycosyltransferase that mediates the conversion of QA-di to QA-tri via the elongation of the C-3 sugar chain with a D-xylose. The sequence is that of UDP-glucosyl transferase 73CC6 from Saponaria officinalis (Common soapwort).